The primary structure comprises 309 residues: Methyltransferase AacuQ (309 aa).

The segment at 57–149 (DVGAGNGPYA…QLRPGGTFAC (93 aa)) is methyltransferase domain.

Belongs to the methyltransferase superfamily.

Its pathway is secondary metabolite biosynthesis. Methyltransferase; part of the gene cluster that mediates the biosynthesis of the tetrahydroxanthone dimer secalonic acid D. The pathway begins with the synthesis of atrochrysone thioester by the polyketide synthase AacuL. The atrochrysone carboxyl ACP thioesterase AacuM then breaks the thioester bond and releases the atrochrysone carboxylic acid from AacuL. Atrochrysone carboxylic acid is decarboxylated by the decarboxylase AacuI, and oxidized by the anthrone oxygenase AacuG to yield emodin. Emodin is then reduced to emodin hydroquinone by a yet unidentified oxidoreductase. A-ring reduction by the short chain dehydrogenase AacuN, dehydration by the scytalone dehydratase-like protein AacuK and probable spontaneous re-oxidation, results in overall deoxygenation to chrysophanol. Baeyer-Villiger oxidation by the Baeyer-Villiger monooxygenase (BVMO) AacuH then yields monodictyphenone. Monodictyphenone is transformed into compounds with the tetrahydroxanthone skeleton via methylesterification by the methyltransferase AacuQ, followed by the action of the flavin-dependent monooxygenase AacuC, the isomerase AacuP, and the short chain dehydrogenase/reductase AacuF or AacuD. AacuF and AacuD should accept the same compound as a substrate but perform the ketoreduction with a different stereoselectivity, thus yielding blennolides B and A, respectively. In the final step of the biosynthesis, the cytochrome P450 monooxygenase AacuE accepts blennolide B and/or blennolide A to conduct the dimerization reaction to furnish the tetrahydroxanthone dimers, secalonic acids D, B, and F. In Aspergillus aculeatus (strain ATCC 16872 / CBS 172.66 / WB 5094), this protein is Methyltransferase AacuQ.